An 80-amino-acid chain; its full sequence is SPbeta prophage-derived uncharacterized HTH-type transcriptional regulator YotL (80 aa).

In terms of domain architecture, HTH cro/C1-type spans 12–67 (LNELMHEYSVSIEDLVECTGLSKQRINDYVGGFKSNMNIGTAMTFADAIGCSIEEL). A DNA-binding region (H-T-H motif) is located at residues 23–42 (IEDLVECTGLSKQRINDYVG).

In Bacillus subtilis (strain 168), this protein is SPbeta prophage-derived uncharacterized HTH-type transcriptional regulator YotL (yotL).